Reading from the N-terminus, the 407-residue chain is Pyridinium-3,5-bisthiocarboxylic acid mononucleotide nickel insertion protein (407 aa).

It belongs to the LarC family.

The catalysed reaction is Ni(II)-pyridinium-3,5-bisthiocarboxylate mononucleotide = pyridinium-3,5-bisthiocarboxylate mononucleotide + Ni(2+). Its function is as follows. Involved in the biosynthesis of a nickel-pincer cofactor ((SCS)Ni(II) pincer complex). Binds Ni(2+), and functions in nickel delivery to pyridinium-3,5-bisthiocarboxylic acid mononucleotide (P2TMN), to form the mature cofactor. Is thus probably required for the activation of nickel-pincer cofactor-dependent enzymes. This is Pyridinium-3,5-bisthiocarboxylic acid mononucleotide nickel insertion protein from Acetivibrio thermocellus (strain ATCC 27405 / DSM 1237 / JCM 9322 / NBRC 103400 / NCIMB 10682 / NRRL B-4536 / VPI 7372) (Clostridium thermocellum).